The chain runs to 629 residues: Transferrin (629 aa).

The N-terminal stretch at 1–21 (MTIKNVLKLAALLGVLALVQA) is a signal peptide. 2 consecutive Transferrin-like domains span residues 26–366 (YRMC…ERDG) and 372–621 (MKMC…GLKC). Intrachain disulfides connect Cys-29–Cys-63 and Cys-38–Cys-54. Tyr-111 provides a ligand contact to Fe(3+). Disulfide bonds link Cys-135–Cys-231, Cys-184–Cys-210, Cys-207–Cys-216, Cys-270–Cys-283, Cys-375–Cys-409, and Cys-385–Cys-403. Thr-137, Arg-141, Val-143, and Gly-144 together coordinate hydrogencarbonate. A Fe(3+)-binding site is contributed by Tyr-225. Positions 408 and 561 each coordinate Fe(3+).

It belongs to the transferrin family. In terms of assembly, monomer.

In terms of biological role, transferrins are iron binding transport proteins which bind Fe(3+) ion in association with the binding of an anion, usually bicarbonate. This transferrin binds only one Fe(3+) ion per protein molecule. Transports iron ions from the hemolymph into the eggs during the vitellogenic stage (oogenesis). The sequence is that of Transferrin from Sarcophaga peregrina (Flesh fly).